The sequence spans 744 residues: Leukocyte immunoglobulin-like receptor subfamily B member 3A (744 aa).

Positions 1–24 (MTFTFTALLCLGLTLGLWIPVLTG) are cleaved as a signal peptide. The Extracellular portion of the chain corresponds to 25-543 (SLPKPILRVQ…PPDGLQRYLK (519 aa)). Ig-like C2-type domains lie at 26–119 (LPKP…VVTG), 121–221 (YSKP…LVSG), 223–316 (LQKP…VVTG), 320–419 (YHPL…LITG), and 426–520 (FLSV…IVSG). 3 disulfide bridges follow: Cys49/Cys98, Cys144/Cys197, and Cys246/Cys295. A glycan (N-linked (GlcNAc...) asparagine) is linked at Asn79. A glycan (N-linked (GlcNAc...) asparagine) is linked at Asn338. Cys343 and Cys395 are oxidised to a cystine. The N-linked (GlcNAc...) asparagine glycan is linked to Asn440. Cys445 and Cys496 are joined by a disulfide. Residues 544-564 (ALIGVSVAFLLFLFILIFILL) form a helical membrane-spanning segment. The Cytoplasmic portion of the chain corresponds to 565 to 744 (RRRHQEKFRK…PGAVPKNKKQ (180 aa)). Residues 572–584 (FRKDDEDAQKGKE) are compositionally biased toward basic and acidic residues. Disordered stretches follow at residues 572 to 617 (FRKD…ESLY), 630 to 652 (ELDT…VEPS), and 667 to 744 (EQLN…NKKQ). Positions 615–620 (SLYASV) match the ITIM motif 1 motif. Short sequence motifs (ITIM motif) lie at residues 695–700 (VTYAQL) and 725–730 (SVYAAL). Phosphotyrosine; by LYN occurs at positions 697 and 727.

In terms of assembly, interacts with LYN, PTPN6/SHP-1 and PTPN11/SHP-2. Post-translationally, phosphorylated on tyrosine residues by LYN. Phosphorylation at Tyr-697 and Tyr-727 is important for interaction with PTPN6/SHP-1 and PTPN11/SHP-2.

The protein resides in the cell membrane. May act as receptor for class I MHC antigens. Becomes activated upon coligation with immune receptors, such as FCGR2B and the B-cell receptor. Down-regulates antigen-induced B-cell activation by recruiting phosphatases to its immunoreceptor tyrosine-based inhibitor motifs (ITIM). The polypeptide is Leukocyte immunoglobulin-like receptor subfamily B member 3A (Rattus norvegicus (Rat)).